The primary structure comprises 432 residues: Mannan endo-1,4-beta-mannosidase 1 (432 aa).

An N-terminal signal peptide occupies residues 1-28; that stretch reads MRLLGAHRAALLVLACVVVVVIHGLGEA. Residues Trp93 and Asn209 each coordinate substrate. Glu210 acts as the Proton donor in catalysis. Substrate is bound at residue Tyr289. Residue Glu329 is the Nucleophile of the active site. Residue Trp371 participates in substrate binding.

Belongs to the glycosyl hydrolase 5 (cellulase A) family. In terms of tissue distribution, ubiquitous.

The protein resides in the secreted. The catalysed reaction is Random hydrolysis of (1-&gt;4)-beta-D-mannosidic linkages in mannans, galactomannans and glucomannans.. The chain is Mannan endo-1,4-beta-mannosidase 1 (MAN1) from Oryza sativa subsp. japonica (Rice).